A 157-amino-acid chain; its full sequence is Arginine repressor (157 aa).

Belongs to the ArgR family.

Its subcellular location is the cytoplasm. It functions in the pathway amino-acid biosynthesis; L-arginine biosynthesis [regulation]. Its function is as follows. Regulates arginine biosynthesis genes. In Bacteroides fragilis (strain YCH46), this protein is Arginine repressor.